We begin with the raw amino-acid sequence, 130 residues long: Probable 4-amino-4-deoxy-L-arabinose-phosphoundecaprenol flippase subunit ArnF (130 aa).

At 1-4 (MGYG) the chain is on the cytoplasmic side. A helical transmembrane segment spans residues 5–25 (WALFSVALVSAAQLLLKWVMM). Over 26-44 (HLPPLGALRLWLDPAYAEP) the chain is Periplasmic. The helical transmembrane segment at 45-65 (LALLMGGLLAYVCSMGCWFMA) threads the bilayer. The Cytoplasmic portion of the chain corresponds to 66–74 (LRRLPLNKA). The chain crosses the membrane as a helical span at residues 75–95 (YPLLSLSYVLVAACALMIPEF). Residues 96 to 103 (NERFTFSR) are Periplasmic-facing. A helical transmembrane segment spans residues 104-124 (LMGVALICGGLLLICLPAGGK). The Cytoplasmic portion of the chain corresponds to 125–130 (GDTPRR).

It belongs to the ArnF family. As to quaternary structure, heterodimer of ArnE and ArnF.

Its subcellular location is the cell inner membrane. Its pathway is bacterial outer membrane biogenesis; lipopolysaccharide biosynthesis. Translocates 4-amino-4-deoxy-L-arabinose-phosphoundecaprenol (alpha-L-Ara4N-phosphoundecaprenol) from the cytoplasmic to the periplasmic side of the inner membrane. This is Probable 4-amino-4-deoxy-L-arabinose-phosphoundecaprenol flippase subunit ArnF from Sodalis glossinidius (strain morsitans).